Consider the following 952-residue polypeptide: Eukaryotic translation initiation factor 3 subunit A (952 aa).

Residues 315–491 (HAERAGIVND…QTITFVSTPP (177 aa)) enclose the PCI domain. Residues 522-849 (DAFAAAIAQA…RRQAEKAAAT (328 aa)) adopt a coiled-coil conformation. The span at 757–797 (EKVIKRKREEKERKLKEAREAEERKRKEEEEAAQKAEEEAR) shows a compositional bias: basic and acidic residues. The tract at residues 757 to 952 (EKVIKRKREE…RGMPSTRGGA (196 aa)) is disordered. Residues 798-809 (AAAALEAEAAAA) show a composition bias toward low complexity. Residues 810-844 (EQRRAEREAQRQSDLERIRAQQEREEEALRRRQAE) show a composition bias toward basic and acidic residues. Composition is skewed to low complexity over residues 856–878 (RPPARAGTTPPTASPAPSSGGPS) and 893–918 (GAPVASSPKPVPSNSAAASAPASNGP).

It belongs to the eIF-3 subunit A family. As to quaternary structure, component of the eukaryotic translation initiation factor 3 (eIF-3) complex.

The protein localises to the cytoplasm. In terms of biological role, RNA-binding component of the eukaryotic translation initiation factor 3 (eIF-3) complex, which is involved in protein synthesis of a specialized repertoire of mRNAs and, together with other initiation factors, stimulates binding of mRNA and methionyl-tRNAi to the 40S ribosome. The eIF-3 complex specifically targets and initiates translation of a subset of mRNAs involved in cell proliferation. In Cryptococcus neoformans var. neoformans serotype D (strain B-3501A) (Filobasidiella neoformans), this protein is Eukaryotic translation initiation factor 3 subunit A.